A 266-amino-acid polypeptide reads, in one-letter code: MGAGCVKVTKYFLFLFNLLFFILGAVILGFGVWILADKNSFISVLQTSSSSLQVGAYVFIGVGAITIVMGFLGCIGAVNEVRCLLGLYFVFLLLILIAQVTVGVLFYFNADKLKKEMGNTVMDIIRNYTANATSSREEAWDYVQAQVKCCGWVSHYNWTENEELMGFTKTTYPCSCEKIKEEDNQLIVKKGFCEADNSTVSENNPEDWPVNTEGCMEKAQAWLQENFGILLGVCAGVAVIELLGLFLSICLCRYIHSEDYSKVPKY.

Over 1-11 (MGAGCVKVTKY) the chain is Cytoplasmic. Cys-5 carries the S-palmitoyl cysteine lipid modification. The chain crosses the membrane as a helical span at residues 12-32 (FLFLFNLLFFILGAVILGFGV). The Extracellular portion of the chain corresponds to 33–53 (WILADKNSFISVLQTSSSSLQ). Residues 54 to 72 (VGAYVFIGVGAITIVMGFL) form a helical membrane-spanning segment. At 73 to 83 (GCIGAVNEVRC) the chain is on the cytoplasmic side. Cys-74 carries the S-palmitoyl cysteine lipid modification. The helical transmembrane segment at 84-110 (LLGLYFVFLLLILIAQVTVGVLFYFNA) threads the bilayer. The Extracellular portion of the chain corresponds to 111 to 227 (DKLKKEMGNT…KAQAWLQENF (117 aa)). N-linked (GlcNAc...) asparagine glycosylation is found at Asn-127, Asn-131, Asn-157, and Asn-197. The helical transmembrane segment at 228–249 (GILLGVCAGVAVIELLGLFLSI) threads the bilayer. Residues 250-266 (CLCRYIHSEDYSKVPKY) are Cytoplasmic-facing.

It belongs to the tetraspanin (TM4SF) family. Forms homooligomers. Interacts directly with IGSF8. Interacts with EGFR. Interacts with VEGFA and PDGFA. Interacts with ITGA4. Interacts with ITGA6; this interaction reduces ITGA6 cell surface expression. Interacts with ITGB1. Interacts with TLR4; this interaction inhibits TLR4-mediated signaling pathway. Interacts with TLR9. Interacts with PLAUR. In terms of processing, palmitoylated. Palmitoylation contributes to oligomerization and surface expression. Highest expression in the spleen and the kidney. Low expression in skeletal muscle and in the heart.

It is found in the cell membrane. The protein localises to the cytoplasmic vesicle. The protein resides in the phagosome. In terms of biological role, structural component of specialized membrane microdomains known as tetraspanin-enriched microdomains (TERMs), which act as platforms for receptor clustering and signaling. Participates thereby in diverse biological functions such as cell signal transduction, adhesion, migration and protein trafficking. Acts as a attenuator of EGF signaling, facilitating ligand-induced endocytosis of the receptor and its subsequent desensitization. Mechanistically, modulates ligand-induced ubiquitination and trafficking of EGFR via E3 ligase CBL phosphorylation by PKC. Increases cell-matrix adhesion by regulating the membrane organization of integrin alpha4/ITA4. Modulates adhesion and suppresses cell migration through other integrins such as the alpha6/ITGA6 and beta1/ITGB1. Decreases cell-associated plasminogen activation by interfering with the interaction between urokinase-type plasminogen activator/PLAU and its receptor PLAUR. Associates with CD4 or CD8 and delivers costimulatory signals for the TCR/CD3 pathway. Plays a role in the restrains phagocyte migration but supports macrophage activation. Plays a role in TLR9 trafficking to acidified CpG-containing compartments by controlling interaction between TLR9 and VAMP3 and subsequent myddosome assembly. Inhibits LPS-induced inflammatory response by preventing binding of LPS to TLR4 on the cell surface. Plays a role in the activation of macrophages into anti-inflammatory phenotypes. Independently of Toll-like receptor (TLR) signaling, is recruited to pathogen-containing phagosomes prior to fusion with lysosomes and participates in antigen presentation. Also acts to control angiogenesis and switch angiogenic milieu to quiescent state by binding and sequestering VEGFA and PDGFA to inhibit the signaling they trigger via their respective cell surface receptor. The protein is CD82 antigen (Cd82) of Mus musculus (Mouse).